Here is a 625-residue protein sequence, read N- to C-terminus: Phosphomethylpyrimidine synthase (625 aa).

Residues N230, M259, Y288, H324, 344–346, 385–388, and E424 each bind substrate; these read SRG and DGLR. Residue H428 coordinates Zn(2+). Y451 provides a ligand contact to substrate. Residue H492 coordinates Zn(2+). The [4Fe-4S] cluster site is built by C572, C575, and C580.

Belongs to the ThiC family. In terms of assembly, homodimer. [4Fe-4S] cluster is required as a cofactor.

It carries out the reaction 5-amino-1-(5-phospho-beta-D-ribosyl)imidazole + S-adenosyl-L-methionine = 4-amino-2-methyl-5-(phosphooxymethyl)pyrimidine + CO + 5'-deoxyadenosine + formate + L-methionine + 3 H(+). It participates in cofactor biosynthesis; thiamine diphosphate biosynthesis. Its function is as follows. Catalyzes the synthesis of the hydroxymethylpyrimidine phosphate (HMP-P) moiety of thiamine from aminoimidazole ribotide (AIR) in a radical S-adenosyl-L-methionine (SAM)-dependent reaction. The sequence is that of Phosphomethylpyrimidine synthase from Xanthomonas axonopodis pv. citri (strain 306).